Consider the following 269-residue polypeptide: Shikimate dehydrogenase (NADP(+)) (269 aa).

Shikimate-binding positions include 17 to 19 and Thr64; that span reads SKS. The active-site Proton acceptor is Lys68. Glu80 serves as a coordination point for NADP(+). Shikimate is bound by residues Asn89 and Asp105. NADP(+) is bound by residues 130–134, 154–159, and Met213; these read GAGGA and NRTRAK. Shikimate is bound at residue Tyr215. Gly237 is an NADP(+) binding site.

Belongs to the shikimate dehydrogenase family. In terms of assembly, homodimer.

It catalyses the reaction shikimate + NADP(+) = 3-dehydroshikimate + NADPH + H(+). It functions in the pathway metabolic intermediate biosynthesis; chorismate biosynthesis; chorismate from D-erythrose 4-phosphate and phosphoenolpyruvate: step 4/7. Involved in the biosynthesis of the chorismate, which leads to the biosynthesis of aromatic amino acids. Catalyzes the reversible NADPH linked reduction of 3-dehydroshikimate (DHSA) to yield shikimate (SA). The protein is Shikimate dehydrogenase (NADP(+)) of Neisseria lactamica.